Consider the following 1063-residue polypeptide: Structural polyprotein (1063 aa).

The disordered stretch occupies residues 1–131 (MASTTPITME…LGPPTNPFQA (131 aa)). A compositionally biased stretch (low complexity) spans 18–34 (AQSRALRAGLAAGASQS). A human C1QBP/SF2P32-binding region spans residues 30 to 69 (GASQSRRPRPPRQRDSSTSGDDSGRDSGGPRRRRGNRGRG). The residue at position 46 (Ser-46) is a Phosphoserine; by host. Over residues 59 to 69 (PRRRRGNRGRG) the composition is skewed to basic residues. Over residues 70–87 (QRKDWSRAPPPPEERQES) the composition is skewed to basic and acidic residues. Residues 93–107 (APKPSRAPPQQPQPP) are compositionally biased toward pro residues. An intrachain disulfide couples Cys-153 to Cys-197. The tract at residues 279 to 300 (GAPQAFLAGLLLAAVAVGTARA) is functions as E2 signal peptide. Residues 301–534 (GLQPRADMAA…LWLATANALS (234 aa)) are Extracellular-facing. 4 N-linked (GlcNAc...) asparagine; by host glycosylation sites follow: Asn-353, Asn-371, Asn-410, and Asn-429. A helical membrane pass occupies residues 535 to 555 (LDHAFAAFVLLVPWVLIFMVC). Over 556–582 (RRACRRRGAAAALTAVVLQGYNPPAYG) the chain is Cytoplasmic. The segment at 563–582 (GAAAALTAVVLQGYNPPAYG) is functions as E1 signal peptide. Topologically, residues 583–1028 (EEAFTYLCTA…QTWAEWAAAH (446 aa)) are extracellular. 8 cysteine pairs are disulfide-bonded: Cys-590–Cys-595, Cys-619–Cys-824, Cys-641–Cys-653, Cys-699–Cys-712, Cys-758–Cys-767, Cys-807–Cys-817, Cys-931–Cys-934, and Cys-950–Cys-983. Asn-658 is a glycosylation site (N-linked (GlcNAc...) asparagine; by host). Ca(2+) contacts are provided by Asn-670 and Ala-671. Positions 718 and 719 each coordinate Ca(2+). N-linked (GlcNAc...) asparagine; by host glycans are attached at residues Asn-759 and Asn-791. 2 O-linked (GalNAc...) threonine; by host glycosylation sites follow: Thr-1011 and Thr-1012. The chain crosses the membrane as a helical span at residues 1029–1049 (WWQLTLGAICALLLAGLLACC). Residues 1050–1063 (AKCLYYLRGAIAPR) lie on the Cytoplasmic side of the membrane.

Homodimer; further assembles into homooligomer. Interacts with human C1QBP. Interacts (via N-terminus) with protease/methyltransferase p150. In terms of assembly, heterodimer with spike glycoprotein E2. As to quaternary structure, heterodimer with spike glycoprotein E1. Post-translationally, structural polyprotein: Specific enzymatic cleavages in vivo yield mature proteins. Two signal peptidase-mediated cleavages within the polyprotein produce the structural proteins capsid, E2, and E1. The E2 signal peptide remains attached to the C-terminus of the capsid protein after cleavage by the signal peptidase. Another signal peptide at E2 C-terminus directs E1 to the ER, with a similar mechanism. Contains three N-linked oligosaccharides. In terms of processing, capsid is phosphorylated on Ser-46 by host. This phosphorylation negatively regulates capsid protein RNA-binding activity. Dephosphorylated by human PP1A.

It is found in the virion. The protein localises to the host cytoplasm. It localises to the host mitochondrion. Its subcellular location is the virion membrane. The protein resides in the host Golgi apparatus membrane. Capsid protein interacts with genomic RNA and assembles into icosahedric core particles 65-70 nm in diameter. The resulting nucleocapsid eventually associates with the cytoplasmic domain of E2 at the cell membrane, leading to budding and formation of mature virions from host Golgi membranes. Phosphorylation negatively regulates RNA-binding activity, possibly delaying virion assembly during the viral replication phase. Capsid protein dimerizes and becomes disulfide-linked in the virion. Modulates genomic RNA replication. Modulates subgenomic RNA synthesis by interacting with human C1QBP/SF2P32. Induces both perinuclear clustering of mitochondria and the formation of electron-dense intermitochondrial plaques, both hallmarks of rubella virus infected cells. Induces apoptosis when expressed in transfected cells. In terms of biological role, responsible for viral attachment to target host cell, by binding to the cell receptor. Its transport to the plasma membrane depends on interaction with E1 protein. The surface glycoproteins display an irregular helical organization and a pseudo-tetrameric inner nucleocapsid arrangement. Its function is as follows. Class II viral fusion protein. Fusion activity is inactive as long as E1 is bound to E2 in mature virion. After virus attachment to target cell and clathrin-mediated endocytosis, acidification of the endosome would induce dissociation of E1/E2 heterodimer and concomitant trimerization of the E1 subunits. This E1 homotrimer is fusion active, and promotes release of viral nucleocapsid in cytoplasm after endosome and viral membrane fusion. The cytoplasmic tail of spike glycoprotein E1 modulates virus release. The surface glycoproteins display an irregular helical organization and a pseudo-tetrameric inner nucleocapsid arrangement. The polypeptide is Structural polyprotein (Homo sapiens (Human)).